The following is a 102-amino-acid chain: Urease subunit beta (102 aa).

Belongs to the urease beta subunit family. Heterotrimer of UreA (gamma), UreB (beta) and UreC (alpha) subunits. Three heterotrimers associate to form the active enzyme.

It localises to the cytoplasm. The enzyme catalyses urea + 2 H2O + H(+) = hydrogencarbonate + 2 NH4(+). The protein operates within nitrogen metabolism; urea degradation; CO(2) and NH(3) from urea (urease route): step 1/1. The chain is Urease subunit beta from Opitutus terrae (strain DSM 11246 / JCM 15787 / PB90-1).